Reading from the N-terminus, the 678-residue chain is DNA ligase (678 aa).

NAD(+) is bound by residues 34–38 (DSEYD), 83–84 (SL), and E114. The active-site N6-AMP-lysine intermediate is the K116. NAD(+) contacts are provided by R137, E176, K293, and K317. Residues C411, C414, C429, and C435 each coordinate Zn(2+). The BRCT domain occupies 594–678 (PTRQPLNGES…LMAGYGQTLS (85 aa)).

Belongs to the NAD-dependent DNA ligase family. LigA subfamily. Requires Mg(2+) as cofactor. Mn(2+) is required as a cofactor.

The enzyme catalyses NAD(+) + (deoxyribonucleotide)n-3'-hydroxyl + 5'-phospho-(deoxyribonucleotide)m = (deoxyribonucleotide)n+m + AMP + beta-nicotinamide D-nucleotide.. DNA ligase that catalyzes the formation of phosphodiester linkages between 5'-phosphoryl and 3'-hydroxyl groups in double-stranded DNA using NAD as a coenzyme and as the energy source for the reaction. It is essential for DNA replication and repair of damaged DNA. The polypeptide is DNA ligase (Acinetobacter baumannii (strain SDF)).